We begin with the raw amino-acid sequence, 246 residues long: 3-deoxy-manno-octulosonate cytidylyltransferase (246 aa).

Belongs to the KdsB family.

The protein resides in the cytoplasm. The enzyme catalyses 3-deoxy-alpha-D-manno-oct-2-ulosonate + CTP = CMP-3-deoxy-beta-D-manno-octulosonate + diphosphate. Its pathway is nucleotide-sugar biosynthesis; CMP-3-deoxy-D-manno-octulosonate biosynthesis; CMP-3-deoxy-D-manno-octulosonate from 3-deoxy-D-manno-octulosonate and CTP: step 1/1. It participates in bacterial outer membrane biogenesis; lipopolysaccharide biosynthesis. In terms of biological role, activates KDO (a required 8-carbon sugar) for incorporation into bacterial lipopolysaccharide in Gram-negative bacteria. The sequence is that of 3-deoxy-manno-octulosonate cytidylyltransferase from Paramagnetospirillum magneticum (strain ATCC 700264 / AMB-1) (Magnetospirillum magneticum).